A 263-amino-acid polypeptide reads, in one-letter code: 3-methyl-2-oxobutanoate hydroxymethyltransferase (263 aa).

Residues D45 and D84 each coordinate Mg(2+). Residues 45-46 (DS), D84, and K112 contribute to the 3-methyl-2-oxobutanoate site. Mg(2+) is bound at residue E114. Catalysis depends on E181, which acts as the Proton acceptor.

Belongs to the PanB family. Homodecamer; pentamer of dimers. The cofactor is Mg(2+).

The protein localises to the cytoplasm. The catalysed reaction is 3-methyl-2-oxobutanoate + (6R)-5,10-methylene-5,6,7,8-tetrahydrofolate + H2O = 2-dehydropantoate + (6S)-5,6,7,8-tetrahydrofolate. It participates in cofactor biosynthesis; (R)-pantothenate biosynthesis; (R)-pantoate from 3-methyl-2-oxobutanoate: step 1/2. Catalyzes the reversible reaction in which hydroxymethyl group from 5,10-methylenetetrahydrofolate is transferred onto alpha-ketoisovalerate to form ketopantoate. The polypeptide is 3-methyl-2-oxobutanoate hydroxymethyltransferase (Proteus mirabilis (strain HI4320)).